A 263-amino-acid polypeptide reads, in one-letter code: Putative hydro-lyase BPUM_0381 (263 aa).

The protein belongs to the D-glutamate cyclase family.

In Bacillus pumilus (strain SAFR-032), this protein is Putative hydro-lyase BPUM_0381.